Consider the following 255-residue polypeptide: 5'-nucleotidase SurE (255 aa).

The a divalent metal cation site is built by aspartate 8, aspartate 9, serine 40, and asparagine 93.

The protein belongs to the SurE nucleotidase family. It depends on a divalent metal cation as a cofactor.

The protein resides in the cytoplasm. The catalysed reaction is a ribonucleoside 5'-phosphate + H2O = a ribonucleoside + phosphate. Functionally, nucleotidase that shows phosphatase activity on nucleoside 5'-monophosphates. This is 5'-nucleotidase SurE from Nitrobacter hamburgensis (strain DSM 10229 / NCIMB 13809 / X14).